The sequence spans 409 residues: Elongation factor Tu, chloroplastic (409 aa).

The tr-type G domain occupies 10 to 214 (KPHVNIGTIG…NVDSYIPTPA (205 aa)). The tract at residues 19-26 (GHVDHGKT) is G1. A GTP-binding site is contributed by 19-26 (GHVDHGKT). T26 contacts Mg(2+). The segment at 60–64 (GITIN) is G2. The segment at 81 to 84 (DCPG) is G3. GTP contacts are provided by residues 81–85 (DCPGH) and 136–139 (NKED). The interval 136–139 (NKED) is G4. Positions 174 to 176 (SAL) are G5.

Belongs to the TRAFAC class translation factor GTPase superfamily. Classic translation factor GTPase family. EF-Tu/EF-1A subfamily.

Its subcellular location is the plastid. It localises to the chloroplast. The catalysed reaction is GTP + H2O = GDP + phosphate + H(+). In terms of biological role, GTP hydrolase that promotes the GTP-dependent binding of aminoacyl-tRNA to the A-site of ribosomes during protein biosynthesis. This is Elongation factor Tu, chloroplastic (tufA) from Ostreococcus tauri.